Reading from the N-terminus, the 171-residue chain is Crossover junction endodeoxyribonuclease RuvC (171 aa).

Catalysis depends on residues Asp-7, Glu-66, and Asp-138. Mg(2+) contacts are provided by Asp-7, Glu-66, and Asp-138.

This sequence belongs to the RuvC family. Homodimer which binds Holliday junction (HJ) DNA. The HJ becomes 2-fold symmetrical on binding to RuvC with unstacked arms; it has a different conformation from HJ DNA in complex with RuvA. In the full resolvosome a probable DNA-RuvA(4)-RuvB(12)-RuvC(2) complex forms which resolves the HJ. Mg(2+) is required as a cofactor.

Its subcellular location is the cytoplasm. The enzyme catalyses Endonucleolytic cleavage at a junction such as a reciprocal single-stranded crossover between two homologous DNA duplexes (Holliday junction).. Its function is as follows. The RuvA-RuvB-RuvC complex processes Holliday junction (HJ) DNA during genetic recombination and DNA repair. Endonuclease that resolves HJ intermediates. Cleaves cruciform DNA by making single-stranded nicks across the HJ at symmetrical positions within the homologous arms, yielding a 5'-phosphate and a 3'-hydroxyl group; requires a central core of homology in the junction. The consensus cleavage sequence is 5'-(A/T)TT(C/G)-3'. Cleavage occurs on the 3'-side of the TT dinucleotide at the point of strand exchange. HJ branch migration catalyzed by RuvA-RuvB allows RuvC to scan DNA until it finds its consensus sequence, where it cleaves and resolves the cruciform DNA. The protein is Crossover junction endodeoxyribonuclease RuvC of Francisella tularensis subsp. holarctica (strain FTNF002-00 / FTA).